Reading from the N-terminus, the 46-residue chain is MINNSSKVRENGESYDVDLVVNLTVKIRFFREWINFIFVIYVGDYG.

This is an uncharacterized protein from Dictyostelium discoideum (Social amoeba).